We begin with the raw amino-acid sequence, 574 residues long: Glycine--tRNA ligase (574 aa).

Substrate-binding residues include arginine 96 and glutamate 162. Residues 194–196, 204–209, 327–328, and 450–453 contribute to the ATP site; these read RNE, IRLREF, EC, and GIDR. 209 to 213 provides a ligand contact to substrate; it reads FTQAE. 446-450 contacts substrate; it reads EPSYG.

The protein belongs to the class-II aminoacyl-tRNA synthetase family.

The protein localises to the cytoplasm. It carries out the reaction tRNA(Gly) + glycine + ATP = glycyl-tRNA(Gly) + AMP + diphosphate. Catalyzes the attachment of glycine to tRNA(Gly). This Methanococcus vannielii (strain ATCC 35089 / DSM 1224 / JCM 13029 / OCM 148 / SB) protein is Glycine--tRNA ligase.